The following is a 142-amino-acid chain: Transcription antitermination protein NusB (142 aa).

It belongs to the NusB family.

Its function is as follows. Involved in transcription antitermination. Required for transcription of ribosomal RNA (rRNA) genes. Binds specifically to the boxA antiterminator sequence of the ribosomal RNA (rrn) operons. This is Transcription antitermination protein NusB from Buchnera aphidicola subsp. Cinara cedri (strain Cc).